Here is a 341-residue protein sequence, read N- to C-terminus: Trace amine-associated receptor 13c (341 aa).

Topologically, residues M1 to V34 are extracellular. The N-linked (GlcNAc...) asparagine glycan is linked to N19. 2 cysteine pairs are disulfide-bonded: C22/C186 and C105/C186. A helical transmembrane segment spans residues V35–I55. Residues S56–N68 lie on the Cytoplasmic side of the membrane. Residues I69–S89 traverse the membrane as a helical segment. The Extracellular portion of the chain corresponds to M90 to C105. Residues L106–I126 traverse the membrane as a helical segment. Residues A127–P147 are Cytoplasmic-facing. The chain crosses the membrane as a helical span at residues V148–V168. Over Y169–N195 the chain is Extracellular. Residues A196–A219 traverse the membrane as a helical segment. Topologically, residues R220 to T257 are cytoplasmic. The helical transmembrane segment at L258 to V278 threads the bilayer. Residues D279–D292 lie on the Extracellular side of the membrane. N283 is a glycosylation site (N-linked (GlcNAc...) asparagine). The helical transmembrane segment at A293–Y313 threads the bilayer. Residues P314–V341 lie on the Cytoplasmic side of the membrane.

It belongs to the G-protein coupled receptor 1 family. As to expression, expressed in olfactory epithelium (at protein level). Detected in a sparse population of olfactory sensory neurons.

It localises to the cell membrane. In terms of biological role, olfactory receptor for medium length odd-chained diamines including cadaverine which is generated by bacterial decarboxylation of the basic amino acid lysine and contributes to the odor of decomposing tissue. Mediates pronounced innate aversion behavior to cadaverine. The chain is Trace amine-associated receptor 13c from Danio rerio (Zebrafish).